A 121-amino-acid polypeptide reads, in one-letter code: Protein MGF 110-14L (121 aa).

The N-terminal stretch at 1–17 (MKVLLGLLLGYSVLILA) is a signal peptide.

The protein belongs to the asfivirus MGF 110 family.

In African swine fever virus (isolate Portugal/Lis 57/1957) (ASFV), this protein is Protein MGF 110-14L.